The sequence spans 348 residues: Ileal sodium/bile acid cotransporter (348 aa).

At 1–28 (MDNSSVCPPNATVCEGDSCVVPESNFNA) the chain is on the extracellular side. N-linked (GlcNAc...) asparagine glycans are attached at residues Asn-3 and Asn-10. A helical membrane pass occupies residues 29–49 (ILNTVMSTVLTILLAMVMFSM). At 50 to 87 (GCNVEVHKFLGHIKRPWGIFVGFLCQFGIMPLTGFILS) the chain is on the cytoplasmic side. A helical membrane pass occupies residues 88–108 (VASGILPVQAVVVLIMGCCPG). Residues 109–126 (GTGSNILAYWIDGDMDLS) lie on the Extracellular side of the membrane. The helical transmembrane segment at 127–147 (VSMTTCSTLLALGMMPLCLFV) threads the bilayer. At 148-157 (YTKMWVDSGT) the chain is on the cytoplasmic side. The helical transmembrane segment at 158–178 (IVIPYDSIGISLVALVIPVSF) threads the bilayer. Topologically, residues 179 to 195 (GMFVNHKWPQKAKIILK) are extracellular. The helical transmembrane segment at 196–216 (IGSITGVILIVLIAVIGGILY) threads the bilayer. At 217–224 (QSAWIIEP) the chain is on the cytoplasmic side. Residues 225–245 (KLWIIGTIFPIAGYSLGFFLA) traverse the membrane as a helical segment. At 246–284 (RLAGQPWYRCRTVALETGMQNTQLCSTIVQLSFSPEDLN) the chain is on the extracellular side. Residues 285 to 305 (LVFTFPLIYTVFQLVFAAVIL) traverse the membrane as a helical segment. Residues 306 to 348 (GIYVTYRKCYGKNDAEFLEKTDNEMDSRPSFDETNKGFQPDEK) lie on the Cytoplasmic side of the membrane. The segment at 328–348 (NEMDSRPSFDETNKGFQPDEK) is disordered. Ser-335 is subject to Phosphoserine.

The protein belongs to the bile acid:sodium symporter (BASS) (TC 2.A.28) family. In terms of assembly, monomer and homodimer. Expressed in ileum.

Its subcellular location is the membrane. It catalyses the reaction taurocholate(out) + 2 Na(+)(out) = taurocholate(in) + 2 Na(+)(in). The enzyme catalyses cholate(out) + 2 Na(+)(out) = cholate(in) + 2 Na(+)(in). The catalysed reaction is taurochenodeoxycholate(out) + 2 Na(+)(out) = taurochenodeoxycholate(in) + 2 Na(+)(in). It carries out the reaction tauroursodeoxycholate(out) + 2 Na(+)(out) = tauroursodeoxycholate(in) + 2 Na(+)(in). It catalyses the reaction glycocholate(out) + 2 Na(+)(out) = glycocholate(in) + 2 Na(+)(in). The enzyme catalyses tauronorcholate(out) + 2 Na(+)(out) = tauronorcholate(in) + 2 Na(+)(in). The catalysed reaction is tauroallocholate(out) + 2 Na(+)(out) = tauroallocholate(in) + 2 Na(+)(in). It carries out the reaction taurodeoxycholate(out) + 2 Na(+)(out) = taurodeoxycholate(in) + 2 Na(+)(in). It catalyses the reaction tauro-beta-muricholate(out) + 2 Na(+)(out) = tauro-beta-muricholate(in) + 2 Na(+)(in). Plays a critical role in the sodium-dependent reabsorption of bile acids from the lumen of the small intestine. Transports various bile acids, unconjugated or conjugated, such as cholate and taurocholate. Also responsible for bile acid transport in the renal proximal tubules, a salvage mechanism that helps conserve bile acids. Works collaboratively with the Na(+)-taurocholate cotransporting polypeptide (NTCP), the organic solute transporter (OST), and the bile salt export pump (BSEP), to ensure efficacious biological recycling of bile acids during enterohepatic circulation. This chain is Ileal sodium/bile acid cotransporter (Slc10a2), found in Mus musculus (Mouse).